Consider the following 466-residue polypeptide: UDP-N-acetylmuramoylalanine--D-glutamate ligase (466 aa).

128–134 (GTNGKST) lines the ATP pocket.

This sequence belongs to the MurCDEF family.

Its subcellular location is the cytoplasm. It carries out the reaction UDP-N-acetyl-alpha-D-muramoyl-L-alanine + D-glutamate + ATP = UDP-N-acetyl-alpha-D-muramoyl-L-alanyl-D-glutamate + ADP + phosphate + H(+). Its pathway is cell wall biogenesis; peptidoglycan biosynthesis. In terms of biological role, cell wall formation. Catalyzes the addition of glutamate to the nucleotide precursor UDP-N-acetylmuramoyl-L-alanine (UMA). In Bartonella henselae (strain ATCC 49882 / DSM 28221 / CCUG 30454 / Houston 1) (Rochalimaea henselae), this protein is UDP-N-acetylmuramoylalanine--D-glutamate ligase.